The primary structure comprises 185 residues: MSKDDSIKKTVTIGLSTTIFFVLSCFASIPVGFNVSIETSAAFLAFIAVAFGPSVGFYVGLIGHIIKDFFLFGNVSWNWVLCSALIGFIYGLPYKIIDLKYQVFTKKKIVYFWLYQVACNFIIWGFFAPQSDLLIYGQPPKLVYLQSFLIVISNILAYSVVGIKLMTIYSCHYTKQATLMKINNS.

Transmembrane regions (helical) follow at residues 13 to 33 (IGLS…PVGF), 42 to 62 (AFLA…VGLI), 69 to 89 (FFLF…IGFI), 109 to 129 (IVYF…FFAP), and 148 to 168 (FLIV…LMTI).

It belongs to the UPF0397 family.

It localises to the cell membrane. The protein is UPF0397 protein AYWB_013 of Aster yellows witches'-broom phytoplasma (strain AYWB).